Here is a 23-residue protein sequence, read N- to C-terminus: Basic phospholipase A2 homolog Vur-S49 analog (23 aa).

The tract at residues 1–23 (SVLEIGLMLQEETEKNPKTSYSI) is disordered.

In terms of processing, contains 7 disulfide bonds. Expressed by the venom gland.

The protein localises to the secreted. The chain is Basic phospholipase A2 homolog Vur-S49 analog from Vipera renardi (Steppe viper).